The primary structure comprises 926 residues: MPVSFLSLASQPQIIDYPAIKEEIDSIKKVAAGDPVSEYRAVSLVLKQTVLKGREVIAEALTRRPHQGRIAALSYAYLTDQIIQLALYAMVGDDEKATDNLVILAVGGYGRGEMALHSDVDIAFLSRRSPRKAQKKLIESLISLLWDVGLRVSQSHRSLSDMVKMAKKDITIRTALLESRYLVGDKALFEEASTRFIQKVVAGSGRDFVAAKLLEWDERHLARGDSRYLVEPHLKEGKGGLRDLQSLFWIAKYLYLEKEARHTVLTSPILTDYALVKADLIAGHEAKRFRRCENFLWAVRCHLHILVKRPEERLNFDVQRSLAEKMGYRSKSGKSAVERFMHHYFLVTKMVGNLAALFIDALKVNHYLKPKSRRSGASKQIDGFPVIQGEIVLDDDFFFRHNPAALITLFAVAYRHRLDIHPLTLRQAGRDARLIDEALQNNPVCNAAFLTLFTLPYNPAPILKIMNNTGVLGRFIPDFGRIVAQMQFDMYHHYTVDEHAIRALDILWQIENNKLEDLYPLGSRLFKQLNARLVLYMALFLHDIAKGREGSHSALGAEIALRLCPRFGLTAAETKLVAWLVKNHLLMSHTAFQRDLADAKTITDFANAVKSPERLRLLYLLTVADISAVGPHIWNSWKNQLLTSLYEACSQCLLEGPTGHGAGRQQRIENRQNDVSEKLDWDNDLFHALVKRLPDDYWFSERTDVIAANMQQIIDTDSKGQSISVRGHEMPAYDATMISLYAIDHPGFFYRISGAIHATGGNILDARIHTTRDGMAMDNLLVQNSQGGMIKSGEHLNRMMQAIEDAATSHIRSSNKLAALRPPLFWRGKAFHVEPLVFIDNQASDRFTVIEVNAQDRPALLHDLGCALFNARLTISSAHIATYGERAVDVFYVSDLFSHKITNQNRLKAIEKRLLAAADAARISEK.

Positions 1 to 379 (MPVSFLSLAS…PKSRRSGASK (379 aa)) are uridylyltransferase. The tract at residues 380–736 (QIDGFPVIQG…GHEMPAYDAT (357 aa)) is uridylyl-removing. The HD domain maps to 496–618 (VDEHAIRALD…VKSPERLRLL (123 aa)). ACT domains are found at residues 737–814 (MISL…IRSS) and 849–926 (VIEV…ISEK).

Belongs to the GlnD family. Mg(2+) is required as a cofactor.

It carries out the reaction [protein-PII]-L-tyrosine + UTP = [protein-PII]-uridylyl-L-tyrosine + diphosphate. The enzyme catalyses [protein-PII]-uridylyl-L-tyrosine + H2O = [protein-PII]-L-tyrosine + UMP + H(+). With respect to regulation, uridylyltransferase (UTase) activity is inhibited by glutamine, while glutamine activates uridylyl-removing (UR) activity. Modifies, by uridylylation and deuridylylation, the PII regulatory proteins (GlnB and homologs), in response to the nitrogen status of the cell that GlnD senses through the glutamine level. Under low glutamine levels, catalyzes the conversion of the PII proteins and UTP to PII-UMP and PPi, while under higher glutamine levels, GlnD hydrolyzes PII-UMP to PII and UMP (deuridylylation). Thus, controls uridylylation state and activity of the PII proteins, and plays an important role in the regulation of nitrogen assimilation and metabolism. The protein is Bifunctional uridylyltransferase/uridylyl-removing enzyme of Zymomonas mobilis subsp. mobilis (strain ATCC 31821 / ZM4 / CP4).